Reading from the N-terminus, the 355-residue chain is uncharacterized protein (355 aa).

This is an uncharacterized protein from Acanthamoeba polyphaga (Amoeba).